Reading from the N-terminus, the 356-residue chain is Tail sheath protein (356 aa).

The protein belongs to the myoviridae tail sheath protein family. Homomultimer.

It is found in the virion. The protein localises to the host cytoplasm. In terms of biological role, polymerizes as an extended structure around the baseplate-tail tube complex. During ejection, the sheath shifts to a contracted form, thereby making the inner tail tube protrude through the host cell envelope. The sequence is that of Tail sheath protein from Clostridioides difficile (Peptoclostridium difficile).